A 462-amino-acid polypeptide reads, in one-letter code: Trigger factor (462 aa).

A PPIase FKBP-type domain is found at 161–246 (GDVVVIDFVG…VKEVRAPKAA (86 aa)). Residues 428 to 437 (SVEDLRKDPD) are compositionally biased toward basic and acidic residues. The interval 428–462 (SVEDLRKDPDEASADGEAAPAKPKKKAAAKKKAAE) is disordered. The span at 449–462 (KPKKKAAAKKKAAE) shows a compositional bias: basic residues.

The protein belongs to the FKBP-type PPIase family. Tig subfamily.

The protein localises to the cytoplasm. The enzyme catalyses [protein]-peptidylproline (omega=180) = [protein]-peptidylproline (omega=0). Functionally, involved in protein export. Acts as a chaperone by maintaining the newly synthesized protein in an open conformation. Functions as a peptidyl-prolyl cis-trans isomerase. This is Trigger factor from Paramagnetospirillum magneticum (strain ATCC 700264 / AMB-1) (Magnetospirillum magneticum).